The primary structure comprises 234 residues: Ubiquinone biosynthesis O-methyltransferase (234 aa).

Residues Arg40, Gly59, Asp80, and Met123 each coordinate S-adenosyl-L-methionine.

Belongs to the methyltransferase superfamily. UbiG/COQ3 family.

It catalyses the reaction a 3-demethylubiquinol + S-adenosyl-L-methionine = a ubiquinol + S-adenosyl-L-homocysteine + H(+). The catalysed reaction is a 3-(all-trans-polyprenyl)benzene-1,2-diol + S-adenosyl-L-methionine = a 2-methoxy-6-(all-trans-polyprenyl)phenol + S-adenosyl-L-homocysteine + H(+). Its pathway is cofactor biosynthesis; ubiquinone biosynthesis. Functionally, O-methyltransferase that catalyzes the 2 O-methylation steps in the ubiquinone biosynthetic pathway. This is Ubiquinone biosynthesis O-methyltransferase from Coxiella burnetii (strain CbuG_Q212) (Coxiella burnetii (strain Q212)).